Reading from the N-terminus, the 234-residue chain is Thymidylate kinase (234 aa).

Gly-21–Ser-28 lines the ATP pocket.

Belongs to the thymidylate kinase family.

It catalyses the reaction dTMP + ATP = dTDP + ADP. Its function is as follows. Phosphorylation of dTMP to form dTDP in both de novo and salvage pathways of dTTP synthesis. The sequence is that of Thymidylate kinase from Rhizobium meliloti (strain 1021) (Ensifer meliloti).